Here is a 181-residue protein sequence, read N- to C-terminus: Large ribosomal subunit protein uL6 (181 aa).

It belongs to the universal ribosomal protein uL6 family. Part of the 50S ribosomal subunit.

In terms of biological role, this protein binds to the 23S rRNA, and is important in its secondary structure. It is located near the subunit interface in the base of the L7/L12 stalk, and near the tRNA binding site of the peptidyltransferase center. In Ruthia magnifica subsp. Calyptogena magnifica, this protein is Large ribosomal subunit protein uL6.